The following is a 211-amino-acid chain: Large ribosomal subunit protein eL13 (211 aa).

Lys-16 bears the N6-acetyllysine mark. Phosphoserine is present on residues Ser-52, Ser-77, and Ser-106. Residues Lys-123 and Lys-145 each participate in a glycyl lysine isopeptide (Lys-Gly) (interchain with G-Cter in SUMO2) cross-link. Lys-174 is covalently cross-linked (Glycyl lysine isopeptide (Lys-Gly) (interchain with G-Cter in SUMO1); alternate). Residues Lys-174 and Lys-177 each participate in a glycyl lysine isopeptide (Lys-Gly) (interchain with G-Cter in SUMO2); alternate cross-link. The residue at position 177 (Lys-177) is an N6-acetyllysine; alternate.

Belongs to the eukaryotic ribosomal protein eL13 family. As to quaternary structure, component of the large ribosomal subunit.

The protein resides in the cytoplasm. Component of the large ribosomal subunit. The ribosome is a large ribonucleoprotein complex responsible for the synthesis of proteins in the cell. The chain is Large ribosomal subunit protein eL13 (Rpl13) from Mus musculus (Mouse).